The sequence spans 49 residues: MKKKVTLACKNCGNRNYTTMKSSAALAERLEVKKYCNNCNSHTVHLETK.

This sequence belongs to the bacterial ribosomal protein bL33 family.

The chain is Large ribosomal subunit protein bL33A from Bacillus licheniformis (strain ATCC 14580 / DSM 13 / JCM 2505 / CCUG 7422 / NBRC 12200 / NCIMB 9375 / NCTC 10341 / NRRL NRS-1264 / Gibson 46).